The chain runs to 170 residues: Regulator of ribonuclease activity A (170 aa).

Belongs to the RraA family. As to quaternary structure, homotrimer. Binds to both RNA-binding sites in the C-terminal region of Rne and to RhlB.

The protein resides in the cytoplasm. Globally modulates RNA abundance by binding to RNase E (Rne) and regulating its endonucleolytic activity. Can modulate Rne action in a substrate-dependent manner by altering the composition of the degradosome. Modulates RNA-binding and helicase activities of the degradosome. The chain is Regulator of ribonuclease activity A from Psychromonas ingrahamii (strain DSM 17664 / CCUG 51855 / 37).